The chain runs to 343 residues: Low conductance mechanosensitive channel YnaI (343 aa).

At 1–9 (MIAELFTNN) the chain is on the periplasmic side. The chain crosses the membrane as a helical span at residues 10-30 (ALNLVIIFGSCAALILMSFWF). Residues 31–40 (RRGNRKRKGF) are Cytoplasmic-facing. The helical transmembrane segment at 41–61 (LFHAVQFLIYTIIISAVGSII) threads the bilayer. Residues 62–77 (NYVIENYKLKFITPGV) lie on the Periplasmic side of the membrane. A helical transmembrane segment spans residues 78 to 98 (IDFICTSLIAVILTIKLFLLI). The Cytoplasmic portion of the chain corresponds to 99–125 (NQFEKQQIKKGRDITSARIMSRIIKIT). The helical transmembrane segment at 126–146 (IIVVLVLLYGEHFGMSLSGLL) threads the bilayer. Thr147 is a topological domain (periplasmic). Residues 148-168 (FGGIGGLAVGMAGKDILSNFF) traverse the membrane as a helical segment. Over 169–343 (SGIMLYFDRP…DNITPPEQGR (175 aa)) the chain is Cytoplasmic.

This sequence belongs to the MscS (TC 1.A.23) family. Homoheptamer.

It is found in the cell inner membrane. Functionally, mechanosensitive channel that protects cells against hypoosmotic stress when highly overexpressed. The protein is Low conductance mechanosensitive channel YnaI (ynaI) of Escherichia coli (strain K12).